A 351-amino-acid polypeptide reads, in one-letter code: ADP-glucose phosphorylase (351 aa).

The segment at 1–63 is disordered; the sequence is MTSPSHASDR…QNPNPKPSSC (63 aa). 41 to 44 contacts ADP-alpha-D-glucose; the sequence is RAKR. 2 residues coordinate Zn(2+): C63 and C66. ADP-alpha-D-glucose is bound by residues 72–74 and N94; that span reads ECA. H133 lines the Zn(2+) pocket. ADP-alpha-D-glucose is bound by residues N173 and 179–182; that span reads GASM. Position 184 (H184) interacts with Zn(2+). Catalysis depends on H186, which acts as the Tele-AMP-histidine intermediate. Q188 lines the ADP-alpha-D-glucose pocket. The Zn(2+) site is built by C216, C219, H255, and H310. Residues G321 and 325 to 326 contribute to the ADP-alpha-D-glucose site; that span reads FE.

The protein belongs to the galactose-1-phosphate uridylyltransferase type 1 family. Homodimer. Requires Zn(2+) as cofactor.

The enzyme catalyses alpha-D-glucose 1-phosphate + ADP + H(+) = ADP-alpha-D-glucose + phosphate. Its function is as follows. Catalyzes the conversion of ADP-glucose and inorganic phosphate (Pi) into glucose-1-phosphate and ADP. Does not possess galactose-1-phosphate uridylyltransferase activity. The chain is ADP-glucose phosphorylase from Arabidopsis thaliana (Mouse-ear cress).